A 545-amino-acid polypeptide reads, in one-letter code: Pentatricopeptide repeat-containing protein At4g18840 (545 aa).

11 PPR repeats span residues 104-138 (NGFTHNSVIRAYANSSTPEVALTVFREMLLGPVFP), 139-173 (DKYSFTFVLKACAAFCGFEEGRQIHGLFIKSGLVT), 174-204 (DVFVENTLVNVYGRSGYFEIARKVLDRMPVR), 205-239 (DAVSWNSLLSAYLEKGLVDEARALFDEMEERNVES), 240-266 (WNFMISGYAAAGLVKEAKEVFDSMPVR), 267-301 (DVVSWNAMVTAYAHVGCYNEVLEVFNKMLDDSTEK), 303-337 (DGFTLVSVLSACASLGSLSQGEWVHVYIDKHGIEI), 338-368 (EGFLATALVDMYSKCGKIDKALEVFRATSKR), 369-403 (DVSTWNSIISDLSVHGLGKDALEIFSEMVYEGFKP), 404-434 (NGITFIGVLSACNHVGMLDQARKLFEMMSSV), and 440-474 (TIEHYGCMVDLLGRMGKIEEAEELVNEIPADEASI). Residues 475 to 545 (LLESLLGACK…ERVNRSLDVA (71 aa)) are type E motif.

Belongs to the PPR family. PCMP-E subfamily.

The protein is Pentatricopeptide repeat-containing protein At4g18840 (PCMP-E101) of Arabidopsis thaliana (Mouse-ear cress).